Here is a 239-residue protein sequence, read N- to C-terminus: Uridylate kinase (239 aa).

Lysine 13–glycine 16 is an ATP binding site. Glycine 55 serves as a coordination point for UMP. ATP is bound by residues glycine 56 and arginine 60. Residues aspartate 75 and threonine 136 to threonine 143 contribute to the UMP site. ATP is bound by residues threonine 163, glutamine 164, tyrosine 169, and aspartate 172.

It belongs to the UMP kinase family. As to quaternary structure, homohexamer.

The protein localises to the cytoplasm. The catalysed reaction is UMP + ATP = UDP + ADP. It functions in the pathway pyrimidine metabolism; CTP biosynthesis via de novo pathway; UDP from UMP (UMPK route): step 1/1. Inhibited by UTP. Functionally, catalyzes the reversible phosphorylation of UMP to UDP. This is Uridylate kinase from Bartonella henselae (strain ATCC 49882 / DSM 28221 / CCUG 30454 / Houston 1) (Rochalimaea henselae).